An 805-amino-acid polypeptide reads, in one-letter code: MAASGVPRGCDILIVYSPDAEEWCQYLQTLFLSSRQVRSQKILTHRLGPEASFSAEDLSLFLSTRCVVVLLSAELVQHFHKPALLPLLQRAFHPPHRVVRLLCGVRDSEEFLDFFPDWAHWQELTCDDEPETYVAAVKKAISEDSGCDSVTDTEPEDEKVVSYSKQQNLPTVTSPGNLMVVQPDRIRCGAETTVYVIVRCKLDDRVATEAEFSPEDSPSVRMEAKVENEYTISVKAPNLSSGNVSLKIYSGDLVVCETVISYYTDMEEIGNLLSNAANPVEFMCQAFKIVPYNTETLDKLLTESLKNNIPASGLHLFGINQLEEEDMMTNQRDEELPTLLHFAAKYGLKNLTALLLTCPGALQAYSVANKHGHYPNTIAEKHGFRDLRQFIDEYVETVDMLKSHIKEELMHGEEADAVYESMAHLSTDLLMKCSLNPGCDEDLYESMAAFVPAATEDLYVEMLQASTSNPIPGDGFSRATKDSMIRKFLEGNSMGMTNLERDQCHLGQEEDVYHTVDDDEAFSVDLASRPPVPVPRPETTAPGAHQLPDNEPYIFKVFAEKSQERPGNFYVSSESIRKGPPVRPWRDRPQSSIYDPFAGMKTPGQRQLITLQEQVKLGIVNVDEAVLHFKEWQLNQKKRSESFRFQQENLKRLRDSITRRQREKQKSGKQTDLEITVPIRHSQHLPAKVEFGVYESGPRKSVIPPRTELRRGDWKTDSTSSTASSTSNRSSTRSLLSVSSGMEGDNEDNEVPEVTRSRSPGPPQVDGTPTMSLERPPRVPPRAASQRPPTRETFHPPPPVPPRGR.

One can recognise a TIR domain in the interval 8-145; that stretch reads RGCDILIVYS…AVKKAISEDS (138 aa). A necessary and sufficient to mediate inhibition of NF-kappa-B downstream of activated TLRs; may mediate interaction with MYD88 and TIRAP region spans residues 10–144; that stretch reads CDILIVYSPD…AAVKKAISED (135 aa). The interval 145–165 is disordered; sequence SGCDSVTDTEPEDEKVVSYSK. Residues 181-317 form the DBB domain; that stretch reads VQPDRIRCGA…NIPASGLHLF (137 aa). At Tyr-263 the chain carries Phosphotyrosine. Tyr-419, Tyr-444, and Tyr-459 each carry phosphotyrosine; by SYK. Tyr-513 is subject to Phosphotyrosine; by ABL1. The segment at 527-547 is disordered; it reads ASRPPVPVPRPETTAPGAHQL. 2 positions are modified to phosphotyrosine; by ABL1: Tyr-553 and Tyr-570. A disordered region spans residues 571 to 590; sequence VSSESIRKGPPVRPWRDRPQ. At Tyr-594 the chain carries Phosphotyrosine; by ABL1. Ser-642 is modified (phosphoserine). Residues 645–667 adopt a coiled-coil conformation; that stretch reads FQQENLKRLRDSITRRQREKQKS. The span at 654–672 shows a compositional bias: basic and acidic residues; the sequence is RDSITRRQREKQKSGKQTD. A disordered region spans residues 654–679; it reads RDSITRRQREKQKSGKQTDLEITVPI. At Tyr-694 the chain carries Phosphotyrosine; by ABL1. The tract at residues 697–805 is disordered; that stretch reads GPRKSVIPPR…PPPPVPPRGR (109 aa). Residues 707-716 show a composition bias toward basic and acidic residues; the sequence is TELRRGDWKT. Low complexity predominate over residues 717–740; that stretch reads DSTSSTASSTSNRSSTRSLLSVSS. Position 718 is a phosphoserine (Ser-718). Over residues 795 to 805 the composition is skewed to pro residues; the sequence is HPPPPVPPRGR.

Homooligomer. Interacts (phosphorylated on tyrosine residues within YXXM motifs) with PIK3R1 (via SH2 domain); required for BCR- and TLR-mediated activation of phosphoinositide 3-kinase. Interacts (via polyproline C-terminal region) with ABI1 (via SH3 domain); the interaction promotes phosphorylation of PIK3AP1 by ABL1. May interact with MYD88 and TIRAP. Constitutively phosphorylated. Phosphorylated on tyrosine residues in C-terminal region by ABL1. Phosphorylated on tyrosine residues within the YXXM motifs by BTK and SYK. Isoform 1 and isoform 2 are phosphorylated on tyrosine residues, most likely within the YXXM motifs, via CD19 activation. Toll-like receptor activation induces appearance of a phosphorylated form associated with membranes. As to expression, expressed in natural killer (NK) cells.

It is found in the cytoplasm. It localises to the cell membrane. Signaling adapter that contributes to B-cell development by linking B-cell receptor (BCR) signaling to the phosphoinositide 3-kinase (PI3K)-Akt signaling pathway. Has a complementary role to the BCR coreceptor CD19, coupling BCR and PI3K activation by providing a docking site for the PI3K subunit PIK3R1. Alternatively, links Toll-like receptor (TLR) signaling to PI3K activation, a process preventing excessive inflammatory cytokine production. Also involved in the activation of PI3K in natural killer cells. May be involved in the survival of mature B-cells via activation of REL. This is Phosphoinositide 3-kinase adapter protein 1 (PIK3AP1) from Homo sapiens (Human).